We begin with the raw amino-acid sequence, 485 residues long: Amyloid beta A4 precursor protein-binding family B member 1-interacting protein (485 aa).

Over residues 84-107 (QAQKTSGNQQSVVTQPSTGTNNDF) the composition is skewed to polar residues. The disordered stretch occupies residues 84-157 (QAQKTSGNQQ…LSQEEQEARA (74 aa)). Pro residues predominate over residues 125–147 (LPPPPPAPDLDLPPPPPPPPPEP). Residues 175–262 (KKLVVKVHMY…KVLFLEKKEK (88 aa)) form the Ras-associating domain. A PH domain is found at 305 to 414 (VPELEGALYL…WVTGIRIAKY (110 aa)).

The protein belongs to the MRL family.

It is found in the cell membrane. The protein resides in the cytoplasm. The protein localises to the cytoskeleton. Functionally, appears to function in the signal transduction from Ras activation to actin cytoskeletal remodeling. This is Amyloid beta A4 precursor protein-binding family B member 1-interacting protein (APBB1IP) from Gallus gallus (Chicken).